The chain runs to 175 residues: Epididymal-specific lipocalin-8 (175 aa).

The signal sequence occupies residues M1–G25. N-linked (GlcNAc...) asparagine glycosylation is found at N66 and N74. C79 and C166 form a disulfide bridge.

This sequence belongs to the calycin superfamily. Lipocalin family.

It is found in the secreted. Its function is as follows. May play a role in male fertility. May act as a retinoid carrier protein within the epididymis. The sequence is that of Epididymal-specific lipocalin-8 (LCN8) from Homo sapiens (Human).